The primary structure comprises 346 residues: Putative transmembrane protein ORF346 (346 aa).

Transmembrane regions (helical) follow at residues 67–87 (LPII…CIVY), 104–124 (IINP…VGLT), 134–154 (PPYL…SGIY), 156–176 (AIGD…GLFI), 181–201 (IILY…LCLS), and 219–241 (YPFS…LGSY). Residues 294–346 (SEYPHSENGSGGSGGSGSGSGSGGSGSGGNSGSGGSGSGSSGSGGNSGSGNNG) form a disordered region. The segment covering 302 to 346 (GSGGSGGSGSGSGSGGSGSGGNSGSGGSGSGSSGSGGNSGSGNNG) has biased composition (gly residues).

It is found in the host membrane. The chain is Putative transmembrane protein ORF346 from Acidianus bottle-shaped virus (isolate Italy/Pozzuoli) (ABV).